A 433-amino-acid polypeptide reads, in one-letter code: Acetyl-CoA-benzylalcohol acetyltransferase (433 aa).

Catalysis depends on proton acceptor residues His-152 and Asp-377.

The protein belongs to the plant acyltransferase family.

The enzyme catalyses benzyl alcohol + acetyl-CoA = benzyl acetate + CoA. It catalyses the reaction (E)-cinnamyl alcohol + acetyl-CoA = (E)-cinnamyl acetate + CoA. In terms of biological role, involved in the biosynthesis of benzyl acetate, a major constituent of the floral scent. Can use benzylalcohol, cinnamylalcohol, 3-cis-hexene-1-ol or heptanol as substrates. Has some activity with 2-phenylethanol and 2-naphtalene-ethanol. This is Acetyl-CoA-benzylalcohol acetyltransferase (BEAT) from Clarkia breweri (Fairy fans).